A 504-amino-acid polypeptide reads, in one-letter code: Glucose-6-phosphate isomerase (504 aa).

Catalysis depends on E333, which acts as the Proton donor. Active-site residues include H364 and K473.

The protein belongs to the GPI family.

Its subcellular location is the cytoplasm. The enzyme catalyses alpha-D-glucose 6-phosphate = beta-D-fructose 6-phosphate. The protein operates within carbohydrate biosynthesis; gluconeogenesis. Its pathway is carbohydrate degradation; glycolysis; D-glyceraldehyde 3-phosphate and glycerone phosphate from D-glucose: step 2/4. Catalyzes the reversible isomerization of glucose-6-phosphate to fructose-6-phosphate. This is Glucose-6-phosphate isomerase from Xanthomonas oryzae pv. oryzae (strain PXO99A).